Reading from the N-terminus, the 329-residue chain is Legumin type B (329 aa).

Disordered stretches follow at residues 47 to 79 and 97 to 149; these read PETQEEQQERHQQKHSLPVGRRGGQHQQEEDGN and EEDT…GRNG. The span at 99-112 shows a compositional bias: basic and acidic residues; it reads DTAKRLRSPRDKRN. A compositionally biased stretch (acidic residues) spans 129-138; the sequence is QQEEEEEEEE. One can recognise a Cupin type-1 domain in the interval 161-308; it reads ENIAQPARAD…AFGLRQRQVT (148 aa).

It belongs to the 11S seed storage protein (globulins) family. Hexamer; each subunit is composed of an acidic and a basic chain derived from a single precursor and linked by a disulfide bond.

This protein found in the seeds of many leguminous and non-leguminous plants is the source of sulfur-containing amino acids in seed meals. This Vicia faba (Broad bean) protein is Legumin type B (LEB6).